A 266-amino-acid chain; its full sequence is Glucosamine-6-phosphate deaminase (266 aa).

D72 acts as the Proton acceptor; for enolization step in catalysis. D141 serves as the catalytic For ring-opening step. Catalysis depends on H143, which acts as the Proton acceptor; for ring-opening step. Residue E148 is the For ring-opening step of the active site.

Belongs to the glucosamine/galactosamine-6-phosphate isomerase family. NagB subfamily. Homohexamer.

It catalyses the reaction alpha-D-glucosamine 6-phosphate + H2O = beta-D-fructose 6-phosphate + NH4(+). Its pathway is amino-sugar metabolism; N-acetylneuraminate degradation; D-fructose 6-phosphate from N-acetylneuraminate: step 5/5. With respect to regulation, allosterically activated by N-acetylglucosamine 6-phosphate (GlcNAc6P). In terms of biological role, catalyzes the reversible isomerization-deamination of glucosamine 6-phosphate (GlcN6P) to form fructose 6-phosphate (Fru6P) and ammonium ion. The protein is Glucosamine-6-phosphate deaminase of Klebsiella pneumoniae (strain 342).